A 276-amino-acid polypeptide reads, in one-letter code: Diaminopimelate epimerase (276 aa).

Asparagine 13, glutamine 46, and asparagine 66 together coordinate substrate. The active-site Proton donor is the cysteine 75. Substrate-binding positions include glycine 76 to asparagine 77, asparagine 159, asparagine 192, and glutamate 210 to arginine 211. Catalysis depends on cysteine 219, which acts as the Proton acceptor. Glycine 220 to serine 221 contributes to the substrate binding site.

Belongs to the diaminopimelate epimerase family. In terms of assembly, homodimer.

It localises to the cytoplasm. It carries out the reaction (2S,6S)-2,6-diaminopimelate = meso-2,6-diaminopimelate. It participates in amino-acid biosynthesis; L-lysine biosynthesis via DAP pathway; DL-2,6-diaminopimelate from LL-2,6-diaminopimelate: step 1/1. Catalyzes the stereoinversion of LL-2,6-diaminopimelate (L,L-DAP) to meso-diaminopimelate (meso-DAP), a precursor of L-lysine and an essential component of the bacterial peptidoglycan. The chain is Diaminopimelate epimerase from Aliivibrio fischeri (strain ATCC 700601 / ES114) (Vibrio fischeri).